A 163-amino-acid chain; its full sequence is Peptidyl-prolyl cis-trans isomerase (163 aa).

Residues 5–162 (YFDVSSNGKP…SVLKIEDCGT (158 aa)) form the PPIase cyclophilin-type domain.

The protein belongs to the cyclophilin-type PPIase family. PPIase A subfamily.

It localises to the cytoplasm. It catalyses the reaction [protein]-peptidylproline (omega=180) = [protein]-peptidylproline (omega=0). Binds cyclosporin A (CsA). CsA mediates some of its effects via an inhibitory action on PPIase. PPIases accelerate the folding of proteins. It catalyzes the cis-trans isomerization of proline imidic peptide bonds in oligopeptides. The chain is Peptidyl-prolyl cis-trans isomerase (PIG28) from Uromyces fabae (Rust fungus).